The chain runs to 370 residues: tRNA-specific 2-thiouridylase MnmA (370 aa).

ATP-binding positions include 12–19 (GLSGGVDS) and Met-38. The tract at residues 98–100 (NPD) is interaction with target base in tRNA. The Nucleophile role is filled by Cys-103. Residues Cys-103 and Cys-201 are joined by a disulfide bond. An ATP-binding site is contributed by Gly-127. Residues 151 to 153 (KDQ) form an interaction with tRNA region. Residue Cys-201 is the Cysteine persulfide intermediate of the active site. An interaction with tRNA region spans residues 319-320 (RY).

The protein belongs to the MnmA/TRMU family.

It localises to the cytoplasm. The catalysed reaction is S-sulfanyl-L-cysteinyl-[protein] + uridine(34) in tRNA + AH2 + ATP = 2-thiouridine(34) in tRNA + L-cysteinyl-[protein] + A + AMP + diphosphate + H(+). Functionally, catalyzes the 2-thiolation of uridine at the wobble position (U34) of tRNA, leading to the formation of s(2)U34. This chain is tRNA-specific 2-thiouridylase MnmA, found in Verminephrobacter eiseniae (strain EF01-2).